A 480-amino-acid polypeptide reads, in one-letter code: Na(+)/H(+) antiporter NhaA (480 aa).

The next 11 membrane-spanning stretches (helical) occupy residues 34–54 (VGGV…NIPA), 76–96 (LSVA…VAGI), 113–133 (AVLP…VYTL), 144–164 (GWAV…AVIG), 174–194 (FLLT…AIFF), 197–217 (RINF…WLLL), 223–243 (GWYV…NSGV), 282–302 (GLAV…GGAL), 312–332 (LGVV…STWL), 350–370 (IFAV…IGEL), and 381–401 (EVKA…TVLL). The disordered stretch occupies residues 454-480 (AAEKAAAARHGGAEVPGGAGEEDGRPA).

The protein belongs to the NhaA Na(+)/H(+) (TC 2.A.33) antiporter family.

Its subcellular location is the cell membrane. It catalyses the reaction Na(+)(in) + 2 H(+)(out) = Na(+)(out) + 2 H(+)(in). In terms of biological role, na(+)/H(+) antiporter that extrudes sodium in exchange for external protons. This chain is Na(+)/H(+) antiporter NhaA, found in Streptomyces antibioticus.